The chain runs to 70 residues: MLQPPLNQLTSKINSKYLIATTAAKRAREIDEKPESALLTKYISEKPVGKALEEIADGVVFPDELFLKTY.

This sequence belongs to the RNA polymerase subunit omega family. In terms of assembly, the RNAP catalytic core consists of 2 alpha, 1 beta, 1 beta' and 1 omega subunit. When a sigma factor is associated with the core the holoenzyme is formed, which can initiate transcription.

It catalyses the reaction RNA(n) + a ribonucleoside 5'-triphosphate = RNA(n+1) + diphosphate. Functionally, promotes RNA polymerase assembly. Latches the N- and C-terminal regions of the beta' subunit thereby facilitating its interaction with the beta and alpha subunits. In Staphylococcus saprophyticus subsp. saprophyticus (strain ATCC 15305 / DSM 20229 / NCIMB 8711 / NCTC 7292 / S-41), this protein is DNA-directed RNA polymerase subunit omega.